We begin with the raw amino-acid sequence, 985 residues long: Bifunctional glutamine synthetase adenylyltransferase/adenylyl-removing enzyme (985 aa).

Residues 1–460 form an adenylyl removase region; the sequence is MSLPSLADFP…HFRQVIADPD (460 aa). Residues 476–985 form an adenylyl transferase region; sequence GGEWLPLWEE…MRIWAQMGLS (510 aa).

Belongs to the GlnE family. Requires Mg(2+) as cofactor.

It carries out the reaction [glutamine synthetase]-O(4)-(5'-adenylyl)-L-tyrosine + phosphate = [glutamine synthetase]-L-tyrosine + ADP. It catalyses the reaction [glutamine synthetase]-L-tyrosine + ATP = [glutamine synthetase]-O(4)-(5'-adenylyl)-L-tyrosine + diphosphate. Involved in the regulation of glutamine synthetase GlnA, a key enzyme in the process to assimilate ammonia. When cellular nitrogen levels are high, the C-terminal adenylyl transferase (AT) inactivates GlnA by covalent transfer of an adenylyl group from ATP to specific tyrosine residue of GlnA, thus reducing its activity. Conversely, when nitrogen levels are low, the N-terminal adenylyl removase (AR) activates GlnA by removing the adenylyl group by phosphorolysis, increasing its activity. The regulatory region of GlnE binds the signal transduction protein PII (GlnB) which indicates the nitrogen status of the cell. This Pseudomonas syringae pv. tomato (strain ATCC BAA-871 / DC3000) protein is Bifunctional glutamine synthetase adenylyltransferase/adenylyl-removing enzyme.